We begin with the raw amino-acid sequence, 122 residues long: Phospholipase A2 crotoxin basic subunit CBb (122 aa).

7 cysteine pairs are disulfide-bonded: Cys26–Cys115, Cys28–Cys44, Cys43–Cys95, Cys49–Cys122, Cys50–Cys88, Cys57–Cys81, and Cys75–Cys86. 3 residues coordinate Ca(2+): Tyr27, Gly29, and Gly31. The active site involves His47. Asp48 provides a ligand contact to Ca(2+). Asp89 is a catalytic residue.

It belongs to the phospholipase A2 family. Group II subfamily. D49 sub-subfamily. In terms of assembly, heterodimer of one of the acidic (CA1, CA2, CA3 or CA4) and one of the basic (CBa1, CBa2, CBb, CBc or CBd) subunits; non-covalently linked. The acidic subunit is non-toxic, without enzymatic activity and comprises 3 peptides that are cross-linked by 5 disulfide bridges. The basic subunit is toxic, has phospholipase A2 activity and is composed of a single chain. Multiple variants of each subunit give different crotoxin complexes that can be subdivided into 2 classes: (1) those of high toxicity, low PLA2 activity (CBb, CBc and CBd linked with high affinity to any CA) and high stability (K(d)=4.5 nM) and (2) those of moderate toxicity, high PLA2 activity (CBa2 linked with low affinity to any CA) and low stability (K(d)=25 nM). The cofactor is Ca(2+). In terms of tissue distribution, expressed by the venom gland.

Its subcellular location is the secreted. The enzyme catalyses a 1,2-diacyl-sn-glycero-3-phosphocholine + H2O = a 1-acyl-sn-glycero-3-phosphocholine + a fatty acid + H(+). Heterodimer CA-CB: Crotoxin is a potent presynaptic neurotoxin that possesses phospholipase A2 (PLA2) activity and exerts a lethal action by blocking neuromuscular transmission. It consists of a non-covalent association of a basic and weakly toxic PLA2 subunit (CBa2, CBb, CBc, or CBd), with a small acidic, non-enzymatic and non-toxic subunit (CA1, CA2, CA3 or CA4). The complex acts by binding to a specific 48-kDa protein (R48) receptor located on presynaptic membranes, forming a transient ternary complex CA-CB-R48, followed by dissociation of the CA-CB complex and release of the CA subunit. At equilibrium, only the CB subunits remain associated with the specific crotoxin receptor. In addition to neurotoxicity, crotoxin has been found to exert myotoxicity, nephrotoxicity, and cardiovascular toxicity. Moreover, anti-inflammatory, immunomodulatory, anti-tumor and analgesic effects of crotoxin have also been reported. In terms of biological role, monomer CBb: The basic subunit of crotoxin is a snake venom phospholipase A2 (PLA2) that exhibits weak neurotoxicity (10-fold less than the heterodimer) and strong anticoagulant effects by binding to factor Xa (F10) and inhibiting the prothrombinase activity. In addition, it shows the same effects described for the heterodimer and binds the nucleotide-binding domain (NBD1) of CFTR chloride channels and increases the channel current. PLA2 catalyzes the calcium-dependent hydrolysis of the 2-acyl groups in 3-sn-phosphoglycerides. The protein is Phospholipase A2 crotoxin basic subunit CBb of Crotalus durissus terrificus (South American rattlesnake).